The chain runs to 646 residues: MIKITFPDGSVREYNEGVTGLQIAESISSRLAQDVLACGVNGETIDLSRPINEDANFVLYKWEDEQGKHAFWHTSAHLLAEALQELYPGIQFGIGPAIENGFYYDVDPGEAIIKEADLPAIEAKMAELAAKKEILVRQSIAKEDALKKFGERGETYKCELISELEDGHITTYTQGAFTDLCRGPHLTSTAPIKAIKLLTVAGAYWRGQEDRKQMTRIYGITFPKKKMLDEYLVMLEEAKKRDHRKIGKEMDLFMFTDMVGKGLPMWLPKGTALRIRLQDFLRRIQARYDYQEVMCPPIGNKNLYITSGHYAKYGKDSFQPIHTPEEGEEYFLKPMNCPHHCMIYKNSPRSYKDLPLRIAEFGTVCRYEQSGELHGLTRVRSFTQDDAHLFCRPDQVKEEFLRVMDIINIVFKSMNFENVEAQISLRDKVNREKYIGSDENWEKAEQAIIEACEEKGLTAKVEYGEAAFYGPKLDFMVKDAIGRRWQLGTIQVDYNLPERFQLEYMGSDNQKHRPVMIHRAPFGSMERFVAVLIEHTAGKFPLWLTPDQVAILPISEKFNEYAEQVKAELRKFDVRAIVDDRNEKIGRKIRDNEMKRIPYMLIVGEKEAENGEVAVRKQGEGDKGTMKIEEFGKNLAEEVSNMINKW.

A TGS domain is found at 1 to 61; that stretch reads MIKITFPDGS…NEDANFVLYK (61 aa). The tract at residues 242-541 is catalytic; the sequence is DHRKIGKEMD…LIEHTAGKFP (300 aa). Residues C337, H388, and H518 each coordinate Zn(2+).

Belongs to the class-II aminoacyl-tRNA synthetase family. As to quaternary structure, homodimer. Zn(2+) serves as cofactor.

It is found in the cytoplasm. The enzyme catalyses tRNA(Thr) + L-threonine + ATP = L-threonyl-tRNA(Thr) + AMP + diphosphate + H(+). Its function is as follows. Catalyzes the attachment of threonine to tRNA(Thr) in a two-step reaction: L-threonine is first activated by ATP to form Thr-AMP and then transferred to the acceptor end of tRNA(Thr). Also edits incorrectly charged L-seryl-tRNA(Thr). The protein is Threonine--tRNA ligase of Phocaeicola vulgatus (strain ATCC 8482 / DSM 1447 / JCM 5826 / CCUG 4940 / NBRC 14291 / NCTC 11154) (Bacteroides vulgatus).